The chain runs to 432 residues: MAIEKPVIVACACPLAGHVGPVLSLVRGLLNRGYEVTFVTGNAFKEKVIEAGCTFVPLQGRADYHEYNLPEIAPGLLTIPPGLEQTGYSMNEIFVKAIPEQYDALQTALKQVEAENKSAVVIGETMFLGVHPISLGAPGLKPQGVITLGTIPCMLKAEKAPGVPSLEPMIDTLVRQQVFQPGTDSEKEIMKTLGATKEPEFLLENIYSSPDRFLQLCPPSLEFHLTSPPPGFSFAGSAPHVKSAGLATPPHLPSWWPDVLSAKRLIVVTQGTAAINYEDLLIPALQAFADEEDTLVVGILGVKGASLPDSVKVPANARIVDYFPYDELLPHASVFIYNGGYGGLQHSLSHGVPVIIGGGMLVDKPAVASRAVWAGVGYDLQTLQATSELVSTAVKEVLATPSYHEKAMAVKKELEKYKSLDILESAISELAS.

It belongs to the UDP-glycosyltransferase family.

It catalyses the reaction (9Z)-17-hydroxyoctadec-9-enoate 17-O-beta-D-glucoside + UDP-alpha-D-glucose = (9Z)-17-hydroxyoctadec-9-enoate 17-O-sophoroside + UDP + H(+). Its function is as follows. Catalyzes the second glycosylation step of sophorolipid biosynthesis, the further glucosylation of the previoulsy formed glucolipid to give rise to an acidic sophorolipid. The polypeptide is UDP-glucosyltransferase B1 (Starmerella bombicola (Yeast)).